Here is a 412-residue protein sequence, read N- to C-terminus: Palmitoyl-acyl carrier protein thioesterase, chloroplastic (412 aa).

2 stretches are compositionally biased toward polar residues: residues 1–19 and 27–40; these read MVAT…SSLD and IGST…SAPN. The N-terminal 49 residues, 1-49, are a transit peptide targeting the chloroplast; sequence MVATSATSSFFPVPSSSLDPNGKGNKIGSTNLAGLNSAPNSGRMKVKPN. Residues 1-64 form a disordered region; sequence MVATSATSSF…KINGKKVGLP (64 aa). Residues asparagine 315, histidine 317, and cysteine 352 contribute to the active site.

This sequence belongs to the acyl-ACP thioesterase family. In terms of tissue distribution, highly expressed in flowers. Expressed in roots, leaves, stems, siliques and seeds.

Its subcellular location is the plastid. It is found in the chloroplast. The enzyme catalyses hexadecanoyl-[ACP] + H2O = hexadecanoate + holo-[ACP] + H(+). Functionally, plays an essential role in chain termination during de novo fatty acid synthesis. Possesses high thioesterase activity for palmitoyl-ACP versus other acyl-ACPs. Substrate preference is 16:0 &gt; 18:1 &gt; 18:0 &gt; 16:1. Plays an essential role in the supply of saturated fatty acids necessary for plant growth and seed development. Contributes to 16:0 production particularly in flowers. May be involved in the synthesis of long chain fatty acid. The polypeptide is Palmitoyl-acyl carrier protein thioesterase, chloroplastic (FATB) (Arabidopsis thaliana (Mouse-ear cress)).